The primary structure comprises 535 residues: Protein PyrBI (535 aa).

An aspartate carbamoyltransferase region spans residues 1–341 (MENKFMGRSL…MIAGKIGDDY (341 aa)). The linker stretch occupies residues 342–370 (KGPEPKSCERVEDEDYIVEVPINNSKESK). Positions 371–535 (VETFSEGVRP…FKEIWGEKKN (165 aa)) are aspartate carbamoyltransferase regulatory region. 4 residues coordinate Zn(2+): cysteine 488, cysteine 493, cysteine 517, and cysteine 520.

It in the N-terminal section; belongs to the aspartate/ornithine carbamoyltransferase superfamily. ATCase family. This sequence in the C-terminal section; belongs to the PyrI family.

It carries out the reaction carbamoyl phosphate + L-aspartate = N-carbamoyl-L-aspartate + phosphate + H(+). The protein operates within pyrimidine metabolism; UMP biosynthesis via de novo pathway; (S)-dihydroorotate from bicarbonate: step 2/3. This chain is Protein PyrBI (pyrBI), found in Treponema denticola (strain ATCC 35405 / DSM 14222 / CIP 103919 / JCM 8153 / KCTC 15104).